Here is a 48-residue protein sequence, read N- to C-terminus: MKIYVIWSFYVLATINKQDYLPKLEFIFHKICIMFKSYYKEYEFHIKP.

This is an uncharacterized protein from Dictyostelium discoideum (Social amoeba).